A 195-amino-acid polypeptide reads, in one-letter code: Translation initiation factor IF-3 (195 aa).

Residues 158–195 (EQSEVQQRPKREGRNMIMFLSPRKTPLIKKEEDAKENN) are disordered. The span at 185–195 (IKKEEDAKENN) shows a compositional bias: basic and acidic residues.

The protein belongs to the IF-3 family. As to quaternary structure, monomer.

Its subcellular location is the cytoplasm. Its function is as follows. IF-3 binds to the 30S ribosomal subunit and shifts the equilibrium between 70S ribosomes and their 50S and 30S subunits in favor of the free subunits, thus enhancing the availability of 30S subunits on which protein synthesis initiation begins. This Prochlorococcus marinus (strain MIT 9515) protein is Translation initiation factor IF-3.